The primary structure comprises 487 residues: Glutamyl-tRNA(Gln) amidotransferase subunit A (487 aa).

Active-site charge relay system residues include lysine 80 and serine 155. The active-site Acyl-ester intermediate is the serine 179.

The protein belongs to the amidase family. GatA subfamily. In terms of assembly, heterotrimer of A, B and C subunits.

It catalyses the reaction L-glutamyl-tRNA(Gln) + L-glutamine + ATP + H2O = L-glutaminyl-tRNA(Gln) + L-glutamate + ADP + phosphate + H(+). Allows the formation of correctly charged Gln-tRNA(Gln) through the transamidation of misacylated Glu-tRNA(Gln) in organisms which lack glutaminyl-tRNA synthetase. The reaction takes place in the presence of glutamine and ATP through an activated gamma-phospho-Glu-tRNA(Gln). The sequence is that of Glutamyl-tRNA(Gln) amidotransferase subunit A from Chloroflexus aurantiacus (strain ATCC 29366 / DSM 635 / J-10-fl).